The sequence spans 157 residues: DNA gyrase inhibitor (157 aa).

Belongs to the DNA gyrase inhibitor family. Interacts with DNA gyrase.

It localises to the cytoplasm. Inhibits the supercoiling activity of DNA gyrase. Acts by inhibiting DNA gyrase at an early step, prior to (or at the step of) binding of DNA by the gyrase. It protects cells against toxins that target DNA gyrase, by inhibiting activity of these toxins and reducing the formation of lethal double-strand breaks in the cell. The sequence is that of DNA gyrase inhibitor from Shigella boydii serotype 18 (strain CDC 3083-94 / BS512).